Consider the following 225-residue polypeptide: Putative adhesin RT0816 (225 aa).

Positions 1-22 (MKKLLLIAATSATILSSSISFA) are cleaved as a signal peptide.

In Rickettsia typhi (strain ATCC VR-144 / Wilmington), this protein is Putative adhesin RT0816.